We begin with the raw amino-acid sequence, 448 residues long: Cytoplasmic tRNA 2-thiolation protein 2 (448 aa).

The protein belongs to the CTU2/NCS2 family.

The protein resides in the cytoplasm. The protein operates within tRNA modification; 5-methoxycarbonylmethyl-2-thiouridine-tRNA biosynthesis. In terms of biological role, plays a central role in 2-thiolation of mcm(5)S(2)U at tRNA wobble positions of tRNA(Lys), tRNA(Glu) and tRNA(Gln). May act by forming a heterodimer with NCS6 that ligates sulfur from thiocarboxylated URM1 onto the uridine of tRNAs at wobble position. Prior mcm(5) tRNA modification by the elongator complex is required for 2-thiolation. May also be involved in protein urmylation. The sequence is that of Cytoplasmic tRNA 2-thiolation protein 2 from Scheffersomyces stipitis (strain ATCC 58785 / CBS 6054 / NBRC 10063 / NRRL Y-11545) (Yeast).